Here is a 124-residue protein sequence, read N- to C-terminus: UPF0102 protein MSMEG_2508/MSMEI_2448 (124 aa).

This sequence belongs to the UPF0102 family.

The chain is UPF0102 protein MSMEG_2508/MSMEI_2448 from Mycolicibacterium smegmatis (strain ATCC 700084 / mc(2)155) (Mycobacterium smegmatis).